Here is a 175-residue protein sequence, read N- to C-terminus: GTP-dependent dephospho-CoA kinase (175 aa).

Positions 48, 49, 50, 66, and 124 each coordinate GTP.

This sequence belongs to the GTP-dependent DPCK family.

The catalysed reaction is 3'-dephospho-CoA + GTP = GDP + CoA + H(+). The protein operates within cofactor biosynthesis; coenzyme A biosynthesis. Catalyzes the GTP-dependent phosphorylation of the 3'-hydroxyl group of dephosphocoenzyme A to form coenzyme A (CoA). The polypeptide is GTP-dependent dephospho-CoA kinase (Thermofilum pendens (strain DSM 2475 / Hrk 5)).